The following is a 367-amino-acid chain: Alanine racemase (367 aa).

Catalysis depends on Lys35, which acts as the Proton acceptor; specific for D-alanine. Lys35 carries the N6-(pyridoxal phosphate)lysine modification. Arg130 lines the substrate pocket. Tyr258 serves as the catalytic Proton acceptor; specific for L-alanine. Met306 provides a ligand contact to substrate.

Belongs to the alanine racemase family. The cofactor is pyridoxal 5'-phosphate.

The enzyme catalyses L-alanine = D-alanine. It functions in the pathway amino-acid biosynthesis; D-alanine biosynthesis; D-alanine from L-alanine: step 1/1. In terms of biological role, catalyzes the interconversion of L-alanine and D-alanine. May also act on other amino acids. The sequence is that of Alanine racemase (alr) from Acinetobacter baumannii (strain SDF).